Consider the following 344-residue polypeptide: Glyceraldehyde-3-phosphate dehydrogenase (344 aa).

NAD(+) contacts are provided by residues 11 to 12 and Gly-110; that span reads TI. 139–141 lines the D-glyceraldehyde 3-phosphate pocket; that stretch reads SCN. Cys-140 (nucleophile) is an active-site residue. Arg-169 serves as a coordination point for NAD(+). Position 195–196 (195–196) interacts with D-glyceraldehyde 3-phosphate; sequence HG. Residue Gln-302 coordinates NAD(+).

This sequence belongs to the glyceraldehyde-3-phosphate dehydrogenase family. In terms of assembly, homotetramer.

Its subcellular location is the cytoplasm. The enzyme catalyses D-glyceraldehyde 3-phosphate + phosphate + NADP(+) = (2R)-3-phospho-glyceroyl phosphate + NADPH + H(+). It carries out the reaction D-glyceraldehyde 3-phosphate + phosphate + NAD(+) = (2R)-3-phospho-glyceroyl phosphate + NADH + H(+). It participates in carbohydrate degradation; glycolysis; pyruvate from D-glyceraldehyde 3-phosphate: step 1/5. The chain is Glyceraldehyde-3-phosphate dehydrogenase from Pyrobaculum arsenaticum (strain DSM 13514 / JCM 11321 / PZ6).